A 360-amino-acid chain; its full sequence is Pyrimidine monooxygenase RutA (360 aa).

Residues 49–50, Asn115, Glu124, 140–141, and Ser190 each bind FMN; these read IK and RY.

This sequence belongs to the NtaA/SnaA/DszA monooxygenase family. RutA subfamily.

It carries out the reaction uracil + FMNH2 + NADH + O2 = (Z)-3-ureidoacrylate + FMN + NAD(+) + H2O + H(+). The enzyme catalyses thymine + FMNH2 + NADH + O2 = (Z)-2-methylureidoacrylate + FMN + NAD(+) + H2O + H(+). In terms of biological role, catalyzes the pyrimidine ring opening between N-3 and C-4 by an unusual flavin hydroperoxide-catalyzed mechanism, adding oxygen atoms in the process to yield ureidoacrylate peracid, that immediately reacts with FMN forming ureidoacrylate and FMN-N(5)-oxide. The FMN-N(5)-oxide reacts spontaneously with NADH to produce FMN. Requires the flavin reductase RutF to regenerate FMN in vivo. The polypeptide is Pyrimidine monooxygenase RutA (Pseudomonas savastanoi pv. phaseolicola (strain 1448A / Race 6) (Pseudomonas syringae pv. phaseolicola (strain 1448A / Race 6))).